Consider the following 152-residue polypeptide: Ribosome maturation factor RimP (152 aa).

This sequence belongs to the RimP family.

It localises to the cytoplasm. Its function is as follows. Required for maturation of 30S ribosomal subunits. The chain is Ribosome maturation factor RimP from Elusimicrobium minutum (strain Pei191).